A 473-amino-acid polypeptide reads, in one-letter code: Phosphoglucosamine mutase (473 aa).

Residue Ser102 is the Phosphoserine intermediate of the active site. Mg(2+) is bound by residues Ser102, Asp248, Asp250, and Asp252. At Ser102 the chain carries Phosphoserine.

It belongs to the phosphohexose mutase family. It depends on Mg(2+) as a cofactor. Activated by phosphorylation.

The catalysed reaction is alpha-D-glucosamine 1-phosphate = D-glucosamine 6-phosphate. Its function is as follows. Catalyzes the conversion of glucosamine-6-phosphate to glucosamine-1-phosphate. The polypeptide is Phosphoglucosamine mutase (Rhodospirillum centenum (strain ATCC 51521 / SW)).